Reading from the N-terminus, the 153-residue chain is Large ribosomal subunit protein uL13 (153 aa).

The protein belongs to the universal ribosomal protein uL13 family. Part of the 50S ribosomal subunit.

Functionally, this protein is one of the early assembly proteins of the 50S ribosomal subunit, although it is not seen to bind rRNA by itself. It is important during the early stages of 50S assembly. The polypeptide is Large ribosomal subunit protein uL13 (Azorhizobium caulinodans (strain ATCC 43989 / DSM 5975 / JCM 20966 / LMG 6465 / NBRC 14845 / NCIMB 13405 / ORS 571)).